Here is a 157-residue protein sequence, read N- to C-terminus: UPF0758 protein VC_0510 (157 aa).

An MPN domain is found at 36 to 157 (ALTNPDATKE…CTSFAERGWL (122 aa)). Zn(2+) is bound by residues H107, H109, and D120. The JAMM motif motif lies at 107–120 (HNHPSGDSTPSQAD).

It belongs to the UPF0758 family.

This Vibrio cholerae serotype O1 (strain ATCC 39315 / El Tor Inaba N16961) protein is UPF0758 protein VC_0510.